A 75-amino-acid chain; its full sequence is Putative snRNP Sm-like protein (75 aa).

The Sm domain occupies 4–75 (RPLDVIHRSL…NVLAISPTEE (72 aa)).

It belongs to the snRNP Sm proteins family.

The polypeptide is Putative snRNP Sm-like protein (Pyrococcus horikoshii (strain ATCC 700860 / DSM 12428 / JCM 9974 / NBRC 100139 / OT-3)).